The following is a 327-amino-acid chain: Thioredoxin reductase (327 aa).

FAD-binding positions include Ser10–Ala13, Ile39–Ala40, Gln44, Asn53, Val86, Cys143, Asp286, and Arg293–Ala295. An intrachain disulfide couples Cys140 to Cys143.

This sequence belongs to the class-II pyridine nucleotide-disulfide oxidoreductase family. In terms of assembly, homodimer. FAD serves as cofactor.

It localises to the cytoplasm. The enzyme catalyses [thioredoxin]-dithiol + NADP(+) = [thioredoxin]-disulfide + NADPH + H(+). Component of the thioredoxin-thioredoxin reductase system which may be involved in biosynthesis of penicillins and cephalosporins and may be important in determining the thiol-disulfide redox balance. This Pneumocystis jirovecii (Human pneumocystis pneumonia agent) protein is Thioredoxin reductase (TRR1).